The primary structure comprises 386 residues: Agamous-like MADS-box protein AGL103 (386 aa).

An MADS-box domain is found at 29-76 (SSSRATSLIKRQQTVFKKAKELSILCDIDVCVICYGSNGELKTWPEER).

As to quaternary structure, interacts with MEE14/CBP1.

Its subcellular location is the nucleus. Its function is as follows. Probable transcription factor that may function in the maintenance of the proper function of the central cell in pollen tube attraction. This Arabidopsis thaliana (Mouse-ear cress) protein is Agamous-like MADS-box protein AGL103.